Reading from the N-terminus, the 262-residue chain is Expansin-A21 (262 aa).

Positions 1–29 are cleaved as a signal peptide; sequence MKLLEKMTYVECFMIIMATWFMFISYSHG. Residues 64–169 form the Expansin-like EG45 domain; the sequence is EGACGYGDLN…RRVPCAKTGG (106 aa). Positions 179-258 constitute an Expansin-like CBD domain; it reads NILTILPYNV…SWGFGQTFDG (80 aa).

It belongs to the expansin family. Expansin A subfamily.

Its subcellular location is the secreted. The protein resides in the cell wall. It localises to the membrane. Functionally, causes loosening and extension of plant cell walls by disrupting non-covalent bonding between cellulose microfibrils and matrix glucans. No enzymatic activity has been found. The sequence is that of Expansin-A21 (EXPA21) from Arabidopsis thaliana (Mouse-ear cress).